The chain runs to 361 residues: Peptide chain release factor 1 (361 aa).

N5-methylglutamine is present on Gln237. Over residues 287-297 the composition is skewed to basic and acidic residues; it reads KQQKEQSDTRK. The segment at 287–313 is disordered; sequence KQQKEQSDTRKSLVGSGDRSERIRTYN.

Belongs to the prokaryotic/mitochondrial release factor family. In terms of processing, methylated by PrmC. Methylation increases the termination efficiency of RF1.

It is found in the cytoplasm. Peptide chain release factor 1 directs the termination of translation in response to the peptide chain termination codons UAG and UAA. This Francisella tularensis subsp. novicida (strain U112) protein is Peptide chain release factor 1.